We begin with the raw amino-acid sequence, 110 residues long: Thioredoxin Asp f 29 (110 aa).

The region spanning 1-110 is the Thioredoxin domain; the sequence is MSHNVEKITD…LEAAIKAHVA (110 aa). Residues Cys-34 and Cys-37 each act as nucleophile in the active site. The cysteines at positions 34 and 37 are disulfide-linked.

Belongs to the thioredoxin family.

Participates in various redox reactions through the reversible oxidation of its active center dithiol to a disulfide and catalyzes dithiol-disulfide exchange reactions. In Aspergillus fumigatus (Neosartorya fumigata), this protein is Thioredoxin Asp f 29.